The following is a 468-amino-acid chain: Squamosa promoter-binding-like protein 5 (468 aa).

An SBP-type zinc finger spans residues 204-281 (PPRCQAEGCK…TEHNRRRRKP (78 aa)). 8 residues coordinate Zn(2+): cysteine 207, cysteine 212, cysteine 229, histidine 232, cysteine 248, cysteine 251, histidine 255, and cysteine 267. A Bipartite nuclear localization signal motif is present at residues 264–280 (KRSCRKRLTEHNRRRRK). Disordered stretches follow at residues 270-305 (RLTE…DASI), 354-374 (TLSL…DGGL), and 405-458 (HHHL…SNNN). A compositionally biased stretch (acidic residues) spans 363–372 (QEEDDEDEDG). Positions 438 to 458 (NNNNILSCSSASDQQNSSNNN) are enriched in low complexity.

As to expression, ubiquitous.

The protein resides in the nucleus. In terms of biological role, trans-acting factor that binds specifically to the consensus nucleotide sequence 5'-TNCGTACAA-3'. The sequence is that of Squamosa promoter-binding-like protein 5 (SPL5) from Oryza sativa subsp. japonica (Rice).